The sequence spans 62 residues: Temporin-1PLa (62 aa).

Residues 1 to 22 (MFTSKKSLLLLFFLGTINLSLC) form the signal peptide. The propeptide occupies 23-45 (EEERDADEEERRDDPDEMNVEVE). The residue at position 60 (Ile-60) is an Isoleucine amide.

In terms of tissue distribution, expressed by the skin glands.

Its subcellular location is the secreted. Antimicrobial activity against the Gram-positive bacterium S.aureus. This is Temporin-1PLa from Lithobates palustris (Pickerel frog).